Reading from the N-terminus, the 198-residue chain is Protein GrpE (198 aa).

Basic and acidic residues predominate over residues 1–18 (MSEQEQKVEIPEVEKQEE). The tract at residues 1–33 (MSEQEQKVEIPEVEKQEEVVVEETQQAEHSQEF) is disordered.

Belongs to the GrpE family. In terms of assembly, homodimer.

It is found in the cytoplasm. Participates actively in the response to hyperosmotic and heat shock by preventing the aggregation of stress-denatured proteins, in association with DnaK and GrpE. It is the nucleotide exchange factor for DnaK and may function as a thermosensor. Unfolded proteins bind initially to DnaJ; upon interaction with the DnaJ-bound protein, DnaK hydrolyzes its bound ATP, resulting in the formation of a stable complex. GrpE releases ADP from DnaK; ATP binding to DnaK triggers the release of the substrate protein, thus completing the reaction cycle. Several rounds of ATP-dependent interactions between DnaJ, DnaK and GrpE are required for fully efficient folding. In Haemophilus influenzae (strain ATCC 51907 / DSM 11121 / KW20 / Rd), this protein is Protein GrpE.